We begin with the raw amino-acid sequence, 415 residues long: MIDRKLLLQDFDKVALSLKKRNHAMGDELERLREVITHYKKQLIELEGLQAFQNKVSKEFGIKMAQKVDTSDLKKELENNKIKLNELSKSVGELEQQIDLKLSIIPNLVDEKTPLGASEEDNIEIKKILTPRVFTFKPKEHFELAQQNGWIDFESGVKLAKSRFSVIRGFGAKIYRALIHLMLDFNEKNGFEIIYTPALVNEKMLFGTGQLPKFKEDVFKIENENLYLIPTAEVTLTNLYNDTIIGVENLPIKMTAHTPCFRSEAGSAGKDTRGMIRQHQFDKVELVAITHSKESDAMQEHMLESASEILKALELPHRFVQLCSADLGFSASNTIDIEVWLPGQNCYREISSVSNTRDFQARRAKIRFKENQKNQLAHTLNGSSLAVGRTMVALMENHQQEDGSIHIPKALEKYL.

Position 231–233 (231–233 (TAE)) interacts with L-serine. ATP is bound at residue 262–264 (RSE). L-serine is bound at residue Glu-285. 349–352 (EISS) is an ATP binding site. Ser-383 is an L-serine binding site.

It belongs to the class-II aminoacyl-tRNA synthetase family. Type-1 seryl-tRNA synthetase subfamily. Homodimer. The tRNA molecule binds across the dimer.

It localises to the cytoplasm. The catalysed reaction is tRNA(Ser) + L-serine + ATP = L-seryl-tRNA(Ser) + AMP + diphosphate + H(+). The enzyme catalyses tRNA(Sec) + L-serine + ATP = L-seryl-tRNA(Sec) + AMP + diphosphate + H(+). Its pathway is aminoacyl-tRNA biosynthesis; selenocysteinyl-tRNA(Sec) biosynthesis; L-seryl-tRNA(Sec) from L-serine and tRNA(Sec): step 1/1. In terms of biological role, catalyzes the attachment of serine to tRNA(Ser). Is also able to aminoacylate tRNA(Sec) with serine, to form the misacylated tRNA L-seryl-tRNA(Sec), which will be further converted into selenocysteinyl-tRNA(Sec). This is Serine--tRNA ligase from Helicobacter pylori (strain HPAG1).